A 592-amino-acid polypeptide reads, in one-letter code: Colicin-A (592 aa).

Gly residues-rich tracts occupy residues 1 to 13 (MPGF…GDGT) and 23 to 34 (PEPGGGSHGNSG). Disordered stretches follow at residues 1 to 57 (MPGF…PGDS) and 373 to 395 (RQRQ…KAKD). Helical transmembrane passes span 528–548 (WVLS…TLGA) and 555–575 (VPAI…GALI).

It belongs to the channel forming colicin family.

The protein localises to the cell membrane. This colicin is a channel-forming colicin. This class of transmembrane toxins depolarize the cytoplasmic membrane, leading to dissipation of cellular energy. In terms of biological role, colicins are polypeptide toxins produced by and active against E.coli and closely related bacteria. This is Colicin-A (caa) from Citrobacter freundii.